Consider the following 156-residue polypeptide: Isotocin-neurophysin IT 2 (156 aa).

The signal sequence occupies residues 1 to 19; the sequence is MTGAAVSVCLLYALSVCSA. Cysteine 20 and cysteine 25 form a disulfide bridge. Glycine 28 is subject to Glycine amide. Intrachain disulfides connect cysteine 41–cysteine 85, cysteine 44–cysteine 58, cysteine 52–cysteine 75, cysteine 59–cysteine 65, cysteine 92–cysteine 105, cysteine 99–cysteine 117, and cysteine 106–cysteine 111.

This sequence belongs to the vasopressin/oxytocin family. In terms of processing, seven disulfide bonds are present in neurophysin.

The protein localises to the secreted. In terms of biological role, isotocin causes contraction of smooth muscles. The sequence is that of Isotocin-neurophysin IT 2 from Oncorhynchus keta (Chum salmon).